Reading from the N-terminus, the 538-residue chain is MAENLKRLVSNEALRTLQEKLDSWLKEYNTNTCDQNLNHCLELIEQVAKVQGQLFGILTTAAQEGGHNDGVETIKSRLLPWLEASFTAASMGKPVDSKVPSLQNTFDRERRKDPSPRDRDMQQLDSNLNSTRSQLNQVQDDLAETEKNLEETKNRSAISLLAAEEEINQLKKQLKTLQAQEDARHRHTDQRSSENRRSEPRSSEERRCEQWSSLKRNADQRDTEVTSDYKKQLRNLKEEIAVLSAEKSALQGRSSRSRSPSPAPRSRSCSRSRSASPSTAVKVRSPSPNRSKLSNVARKAALLSRFSDSYSQARLDAQCLLRRCIDKAETVQRIIYIATVEAFHVAKMAFRHFKIRVRKSLTPSYVGSNDFENAVSDYVICHLDLYDSQSSVNDVIRAMNVNPKISFPPVVDFCLLSDFIQEICCIAFAMQALEPPLDIAYGADGEVFNDCKYRRSYDSDFTAPLVLYHVWPALMENDCVIMKGEAVTRRGAFWNSVRSLSRCRSRSLSPICPRSQIGLSTMSRSRSPSPIRCGLPRF.

Positions 1–273 are interaction with YWHAG/14-3-3 protein gamma; that stretch reads MAENLKRLVS…PRSRSCSRSR (273 aa). Residue Ser-85 is modified to Phosphoserine. The tract at residues 92-137 is disordered; sequence GKPVDSKVPSLQNTFDRERRKDPSPRDRDMQQLDSNLNSTRSQLNQ. Basic and acidic residues predominate over residues 106–122; that stretch reads FDRERRKDPSPRDRDMQ. Coiled-coil stretches lie at residues 118 to 186 and 220 to 256; these read DRDM…ARHR and QRDTEVTSDYKKQLRNLKEEIAVLSAEKSALQGRSSR. The span at 123–137 shows a compositional bias: polar residues; it reads QLDSNLNSTRSQLNQ. Phosphoserine is present on residues Ser-156 and Ser-159. Disordered stretches follow at residues 174 to 227 and 247 to 292; these read LKTL…EVTS and KSAL…NRSK. 2 stretches are compositionally biased toward basic and acidic residues: residues 181 to 209 and 216 to 227; these read EDARHRHTDQRSSENRRSEPRSSEERRCE and RNADQRDTEVTS. Low complexity predominate over residues 253-278; that stretch reads RSSRSRSPSPAPRSRSCSRSRSASPS. Phosphoserine is present on residues Ser-285, Ser-287, and Ser-509.

Belongs to the MIEAP family. In terms of assembly, interacts (via coiled-coil domains) with BNIP3L (via BH3 domain). Interacts (via coiled-coil domains) with BNIP3 (via BH3 domain). Interacts with YWHAG/14-3-3 protein gamma; a protein that also plays a role in MALM.

The protein localises to the cytoplasm. The protein resides in the cytosol. It is found in the mitochondrion outer membrane. It localises to the mitochondrion matrix. Its function is as follows. Key regulator of mitochondrial quality that mediates the repairing or degradation of unhealthy mitochondria in response to mitochondrial damage. Mediator of mitochondrial protein catabolic process (also named MALM) by mediating the degradation of damaged proteins inside mitochondria by promoting the accumulation in the mitochondrial matrix of hydrolases that are characteristic of the lysosomal lumen. Also involved in mitochondrion degradation of damaged mitochondria by promoting the formation of vacuole-like structures (named MIV), which engulf and degrade unhealthy mitochondria by accumulating lysosomes. The physical interaction of SPATA18/MIEAP, BNIP3 and BNIP3L/NIX at the mitochondrial outer membrane regulates the opening of a pore in the mitochondrial double membrane in order to mediate the translocation of lysosomal proteins from the cytoplasm to the mitochondrial matrix. Binds cardiolipin. May form molecular condensates (non-membrane-bounded organelles) within mitochondria that compartmentalize and promote cardiolipin metabolism. The chain is Mitochondria-eating protein (SPATA18) from Macaca fascicularis (Crab-eating macaque).